Reading from the N-terminus, the 159-residue chain is Protein-export protein SecB (159 aa).

The protein belongs to the SecB family. In terms of assembly, homotetramer, a dimer of dimers. One homotetramer interacts with 1 SecA dimer.

The protein localises to the cytoplasm. Functionally, one of the proteins required for the normal export of preproteins out of the cell cytoplasm. It is a molecular chaperone that binds to a subset of precursor proteins, maintaining them in a translocation-competent state. It also specifically binds to its receptor SecA. In Nitrobacter winogradskyi (strain ATCC 25391 / DSM 10237 / CIP 104748 / NCIMB 11846 / Nb-255), this protein is Protein-export protein SecB.